The primary structure comprises 33 residues: Photosystem II reaction center protein Psb30 (33 aa).

Residues 5–25 (ILAQLTALAFIVVSGPLVIAL) traverse the membrane as a helical segment.

This sequence belongs to the Psb30/Ycf12 family. In terms of assembly, PSII is composed of 1 copy each of membrane proteins PsbA, PsbB, PsbC, PsbD, PsbE, PsbF, PsbH, PsbI, PsbJ, PsbK, PsbL, PsbM, PsbT, PsbX, PsbY, PsbZ, Psb30/Ycf12, peripheral proteins of the oxygen-evolving complex and a large number of cofactors. It forms dimeric complexes.

It localises to the plastid. The protein localises to the chloroplast thylakoid membrane. Its function is as follows. A core subunit of photosystem II (PSII), probably helps stabilize the reaction center. The chain is Photosystem II reaction center protein Psb30 from Chaetosphaeridium globosum (Charophycean green alga).